Here is a 265-residue protein sequence, read N- to C-terminus: Expansin-like A2 (265 aa).

The N-terminal stretch at 1–21 (MLQGFLFLLSVVLLFSSSAAA) is a signal peptide. The Expansin-like EG45 domain maps to 42–148 (SGACAYGSMA…RRVPCDYGNK (107 aa)). Residues Asn100 and Asn103 are each glycosylated (N-linked (GlcNAc...) asparagine). One can recognise an Expansin-like CBD domain in the interval 162–244 (NYLAIKLLYQ…NWEAGKSYDA (83 aa)).

Belongs to the expansin family. Expansin-like A subfamily.

Its subcellular location is the secreted. This chain is Expansin-like A2 (EXLA2), found in Arabidopsis thaliana (Mouse-ear cress).